We begin with the raw amino-acid sequence, 874 residues long: Bifunctional uridylyltransferase/uridylyl-removing enzyme (874 aa).

A uridylyltransferase region spans residues 1-336; it reads MIDTSTITNP…DNGKTVETIQ (336 aa). The uridylyl-removing stretch occupies residues 337 to 695; sequence LSDDFQIRGH…LSKKATRGGT (359 aa). Residues 455–577 enclose the HD domain; sequence VDEHSVRLIK…VRDEERLDYL (123 aa). ACT domains are found at residues 696–779 and 802–874; these read EVFV…RAPR and TMEL…TPQD.

This sequence belongs to the GlnD family. Requires Mg(2+) as cofactor.

The enzyme catalyses [protein-PII]-L-tyrosine + UTP = [protein-PII]-uridylyl-L-tyrosine + diphosphate. It catalyses the reaction [protein-PII]-uridylyl-L-tyrosine + H2O = [protein-PII]-L-tyrosine + UMP + H(+). Its activity is regulated as follows. Uridylyltransferase (UTase) activity is inhibited by glutamine, while glutamine activates uridylyl-removing (UR) activity. Its function is as follows. Modifies, by uridylylation and deuridylylation, the PII regulatory proteins (GlnB and homologs), in response to the nitrogen status of the cell that GlnD senses through the glutamine level. Under low glutamine levels, catalyzes the conversion of the PII proteins and UTP to PII-UMP and PPi, while under higher glutamine levels, GlnD hydrolyzes PII-UMP to PII and UMP (deuridylylation). Thus, controls uridylylation state and activity of the PII proteins, and plays an important role in the regulation of nitrogen assimilation and metabolism. The protein is Bifunctional uridylyltransferase/uridylyl-removing enzyme of Photobacterium profundum (strain SS9).